A 208-amino-acid polypeptide reads, in one-letter code: Probable GTP-binding protein EngB (208 aa).

Residues 23 to 205 (LTSEMVILGR…RQTLLKYLLT (183 aa)) enclose the EngB-type G domain. Residues 31–38 (GRSNVGKS), 57–61 (GKTRL), 84–87 (DLPG), 154–157 (TKFD), and 182–184 (FNA) each bind GTP. The Mg(2+) site is built by Ser38 and Thr59.

The protein belongs to the TRAFAC class TrmE-Era-EngA-EngB-Septin-like GTPase superfamily. EngB GTPase family. It depends on Mg(2+) as a cofactor.

Necessary for normal cell division and for the maintenance of normal septation. The chain is Probable GTP-binding protein EngB from Helicobacter pylori (strain G27).